The following is a 238-amino-acid chain: Succinate dehydrogenase iron-sulfur subunit (238 aa).

The 2Fe-2S ferredoxin-type domain maps to 8–97; it reads YRYNPDVDDA…KIVIRPLPGL (90 aa). Residues C55, C60, and C75 each coordinate [2Fe-2S] cluster. Residues 139 to 169 enclose the 4Fe-4S ferredoxin-type domain; it reads QREKLDGLYECILCACCSTSCPSFWWNPDKF. Positions 149, 152, and 155 each coordinate [4Fe-4S] cluster. C159 contributes to the [3Fe-4S] cluster binding site. An a ubiquinone-binding site is contributed by W164. Positions 206 and 212 each coordinate [3Fe-4S] cluster. Residue C216 coordinates [4Fe-4S] cluster.

Belongs to the succinate dehydrogenase/fumarate reductase iron-sulfur protein family. In terms of assembly, part of an enzyme complex containing four subunits: a flavoprotein, an iron-sulfur, cytochrome b-556, and a hydrophobic anchor protein. The complex forms trimers. Requires [2Fe-2S] cluster as cofactor. It depends on [3Fe-4S] cluster as a cofactor. [4Fe-4S] cluster is required as a cofactor.

Its subcellular location is the cell inner membrane. It catalyses the reaction a quinone + succinate = fumarate + a quinol. It participates in carbohydrate metabolism; tricarboxylic acid cycle; fumarate from succinate (bacterial route): step 1/1. Functionally, two distinct, membrane-bound, FAD-containing enzymes are responsible for the catalysis of fumarate and succinate interconversion; the fumarate reductase is used in anaerobic growth, and the succinate dehydrogenase is used in aerobic growth. The protein is Succinate dehydrogenase iron-sulfur subunit (sdhB) of Escherichia coli (strain K12).